Reading from the N-terminus, the 424-residue chain is UDP-N-acetylglucosamine 1-carboxyvinyltransferase (424 aa).

22–23 (KN) contacts phosphoenolpyruvate. UDP-N-acetyl-alpha-D-glucosamine is bound at residue arginine 93. The active-site Proton donor is cysteine 117. Cysteine 117 carries the 2-(S-cysteinyl)pyruvic acid O-phosphothioketal modification. UDP-N-acetyl-alpha-D-glucosamine contacts are provided by residues 122-126 (RPVDL), 162-165 (KVSV), aspartate 307, and isoleucine 329.

The protein belongs to the EPSP synthase family. MurA subfamily.

The protein localises to the cytoplasm. It catalyses the reaction phosphoenolpyruvate + UDP-N-acetyl-alpha-D-glucosamine = UDP-N-acetyl-3-O-(1-carboxyvinyl)-alpha-D-glucosamine + phosphate. It functions in the pathway cell wall biogenesis; peptidoglycan biosynthesis. Functionally, cell wall formation. Adds enolpyruvyl to UDP-N-acetylglucosamine. The protein is UDP-N-acetylglucosamine 1-carboxyvinyltransferase of Histophilus somni (strain 129Pt) (Haemophilus somnus).